Reading from the N-terminus, the 388-residue chain is Putative F-box protein At3g49520 (388 aa).

The 47-residue stretch at 1–47 folds into the F-box domain; sequence MTTISDLPYDLVKEIFSWVPFTSLRAVRSTCKTWNALSKNQIFGKKS.

The polypeptide is Putative F-box protein At3g49520 (Arabidopsis thaliana (Mouse-ear cress)).